Consider the following 208-residue polypeptide: MAKFIKSAQYFDQYPVDKQFEICVIGRSNVGKSSLINALANEKIARTSNTPGRTQLVNFFDFNSFRLVDLPGYGFARVSKDKQLDLATIIDQYLGYRQNLCAVFQICDINVLTNDDVEMSRYFENQNYAHFVVLNKVDKVNKSHFDNNKQKIAKFLNISVDRLLCVSAQKNTNVATLFALMKKVVIETRQKQLLLKKEEKKSSEEEIK.

Positions 18 to 187 (KQFEICVIGR…FALMKKVVIE (170 aa)) constitute an EngB-type G domain. GTP is bound by residues 26–33 (GRSNVGKS), 52–56 (GRTQL), 69–72 (DLPG), 135–138 (NKVD), and 166–168 (VSA). Residues Ser33 and Thr54 each contribute to the Mg(2+) site.

The protein belongs to the TRAFAC class TrmE-Era-EngA-EngB-Septin-like GTPase superfamily. EngB GTPase family. Requires Mg(2+) as cofactor.

Its function is as follows. Necessary for normal cell division and for the maintenance of normal septation. This Ureaplasma urealyticum serovar 10 (strain ATCC 33699 / Western) protein is Probable GTP-binding protein EngB.